Here is a 1022-residue protein sequence, read N- to C-terminus: GPI ethanolamine phosphate transferase 1 (1022 aa).

Residues 1 to 6 (MARVGR) lie on the Cytoplasmic side of the membrane. The chain crosses the membrane as a helical span at residues 7–27 (VGFLTLAVVFHLMYAYSIFDI). Over 28 to 466 (YFVSPIVSGM…LQTYDWLFLR (439 aa)) the chain is Lumenal. N-linked (GlcNAc...) asparagine glycans are attached at residues N148 and N433. A helical membrane pass occupies residues 467 to 487 (TIVSLGYLGWIAYALTTVIDL). The Cytoplasmic portion of the chain corresponds to 488–498 (HVLHGKSESNR). A helical membrane pass occupies residues 499-519 (TTFSIMFFSSILVALFSVLLY). At 520–560 (QGSSWRYYLYALFPIFFWEEVFARRKALLAGREILLGHVHS) the chain is on the lumenal side. A helical membrane pass occupies residues 561–581 (VSGYFAFAIQLLLYVGVLEAL). At 582-589 (VQSYFHRD) the chain is on the cytoplasmic side. A helical transmembrane segment spans residues 590–610 (IFTVCFILGGFWPITYGTKFL). Residues 611 to 614 (GQHK) are Lumenal-facing. Residues 615–635 (LLSASWALGCFLMSIFTLLPA) form a helical membrane-spanning segment. Topologically, residues 636–640 (NKVED) are cytoplasmic. Residues 641 to 661 (MMMISCGSLLMFLTGLLYLIF) form a helical membrane-spanning segment. Topologically, residues 662–685 (ERSILGQKRSSDPNSVVSSCGSRT) are lumenal. The chain crosses the membrane as a helical span at residues 686 to 706 (IMGAQVGMILLALIVTRSSVA). The Cytoplasmic segment spans residues 707 to 713 (SLQAKQG). Residues 714-734 (LPLGNQVLGWAILVSSLLLPF) form a helical membrane-spanning segment. Residues 735 to 749 (LHRLYPNSHYLHRLM) lie on the Lumenal side of the membrane. The next 2 membrane-spanning stretches (helical) occupy residues 750–770 (VIFL…EGLF) and 771–791 (YFVF…IYIH). Topologically, residues 792 to 837 (TTAPTREQDHSVANGSLPAKKPSPGNTVVVEGQPYRYRTLSVSDAR) are lumenal. N805 carries N-linked (GlcNAc...) asparagine glycosylation. A helical transmembrane segment spans residues 838–858 (VALFFFFLLQSGFFSTGNIAS). The Cytoplasmic segment spans residues 859 to 880 (VSSFSLDSVYRLIPIFNPFAQG). A helical membrane pass occupies residues 881–901 (ALLILKLLIPFAIISANLGIL). Residues 902–910 (NHRLEVAPS) lie on the Lumenal side of the membrane. A helical membrane pass occupies residues 911-931 (ALFMVVMSISDVMTLNFFYMV). Over 932–947 (RDEGSWLEIGTTISHF) the chain is Cytoplasmic. Residues 948–968 (CIASFLCTFVAVLEFLSELFI) form a helical membrane-spanning segment. The Lumenal segment spans residues 969–1022 (SGVDFGHPATTVGSAVAKAVNGSVACGHSPDSDISGEDSTSVGITAKADPDARS). N989 carries an N-linked (GlcNAc...) asparagine glycan. The segment at 998-1022 (PDSDISGEDSTSVGITAKADPDARS) is disordered.

It belongs to the PIGG/PIGN/PIGO family. PIGN subfamily.

The protein localises to the endoplasmic reticulum membrane. Its pathway is glycolipid biosynthesis; glycosylphosphatidylinositol-anchor biosynthesis. Its function is as follows. Ethanolamine phosphate transferase involved in glycosylphosphatidylinositol-anchor biosynthesis. Transfers ethanolamine phosphate to the first alpha-1,4-linked mannose of the glycosylphosphatidylinositol precursor of GPI-anchor. This Aspergillus oryzae (strain ATCC 42149 / RIB 40) (Yellow koji mold) protein is GPI ethanolamine phosphate transferase 1 (mcd4).